We begin with the raw amino-acid sequence, 274 residues long: NADH-ubiquinone oxidoreductase chain 2 (274 aa).

Transmembrane regions (helical) follow at residues 28 to 48 (MIIM…FWFP), 54 to 74 (LTWM…LMLI), 79 to 99 (IKYL…IGGL), 107 to 127 (LMAF…MISE), 128 to 148 (SIWL…TFMF), 171 to 191 (FTLF…GFLP), 206 to 226 (FLLL…LRIC), and 254 to 274 (LIMT…YFMF).

The protein belongs to the complex I subunit 2 family.

The protein resides in the mitochondrion inner membrane. It carries out the reaction a ubiquinone + NADH + 5 H(+)(in) = a ubiquinol + NAD(+) + 4 H(+)(out). Functionally, core subunit of the mitochondrial membrane respiratory chain NADH dehydrogenase (Complex I) that is believed to belong to the minimal assembly required for catalysis. Complex I functions in the transfer of electrons from NADH to the respiratory chain. The immediate electron acceptor for the enzyme is believed to be ubiquinone. The sequence is that of NADH-ubiquinone oxidoreductase chain 2 (mt:ND2) from Drosophila mauritiana (Fruit fly).